Reading from the N-terminus, the 359-residue chain is S-adenosylmethionine:tRNA ribosyltransferase-isomerase (359 aa).

The protein belongs to the QueA family. As to quaternary structure, monomer.

The protein localises to the cytoplasm. The catalysed reaction is 7-aminomethyl-7-carbaguanosine(34) in tRNA + S-adenosyl-L-methionine = epoxyqueuosine(34) in tRNA + adenine + L-methionine + 2 H(+). It functions in the pathway tRNA modification; tRNA-queuosine biosynthesis. Functionally, transfers and isomerizes the ribose moiety from AdoMet to the 7-aminomethyl group of 7-deazaguanine (preQ1-tRNA) to give epoxyqueuosine (oQ-tRNA). The protein is S-adenosylmethionine:tRNA ribosyltransferase-isomerase of Alcanivorax borkumensis (strain ATCC 700651 / DSM 11573 / NCIMB 13689 / SK2).